Reading from the N-terminus, the 564-residue chain is Probable metalloprotease ARX1 (564 aa).

It belongs to the peptidase M24 family. Component of the nucleoplasmic and cytoplasmic pre-60S ribosomal particles.

The protein resides in the cytoplasm. It is found in the nucleus. In terms of biological role, probable metalloprotease involved in proper assembly of pre-ribosomal particles during the biogenesis of the 60S ribosomal subunit. Accompanies the pre-60S particles to the cytoplasm. This is Probable metalloprotease ARX1 (ARX1) from Candida albicans (strain SC5314 / ATCC MYA-2876) (Yeast).